The following is a 283-amino-acid chain: Pantothenate synthetase (283 aa).

Residue 30–37 (MGALHEGH) participates in ATP binding. H37 serves as the catalytic Proton donor. Residue Q61 coordinates (R)-pantoate. Q61 lines the beta-alanine pocket. 150–153 (GRKD) is a binding site for ATP. Q156 lines the (R)-pantoate pocket. ATP contacts are provided by residues V179 and 187–190 (MSSR).

The protein belongs to the pantothenate synthetase family. Homodimer.

It localises to the cytoplasm. It carries out the reaction (R)-pantoate + beta-alanine + ATP = (R)-pantothenate + AMP + diphosphate + H(+). It participates in cofactor biosynthesis; (R)-pantothenate biosynthesis; (R)-pantothenate from (R)-pantoate and beta-alanine: step 1/1. Catalyzes the condensation of pantoate with beta-alanine in an ATP-dependent reaction via a pantoyl-adenylate intermediate. The chain is Pantothenate synthetase from Rhodopirellula baltica (strain DSM 10527 / NCIMB 13988 / SH1).